The primary structure comprises 1029 residues: Tyrosine-protein kinase-like otk (1029 aa).

An N-terminal signal peptide occupies residues 1–18 (MISIYGLVMALMMASVLA). The Extracellular segment spans residues 19–577 (SSSRFQRVPQ…GGDGFLVTRA (559 aa)). 5 Ig-like C2-type domains span residues 21–110 (SRFQ…AKLS), 109–195 (LSVI…RVMS), 247–361 (PEDL…APIS), 364–459 (PGIL…VAIN), and 464–554 (PKFS…VQLV). An N-linked (GlcNAc...) asparagine glycan is attached at Asn35. 4 cysteine pairs are disulfide-bonded: Cys42–Cys91, Cys133–Cys184, Cys272–Cys350, and Cys395–Cys443. Asn332, Asn413, Asn425, Asn440, Asn453, Asn508, and Asn520 each carry an N-linked (GlcNAc...) asparagine glycan. Cys486 and Cys538 are disulfide-bonded. A helical membrane pass occupies residues 578-598 (VLITMTVALAYIVLVVGLMLW). Residues 599 to 1029 (CRYRRQARKA…LSKAMQSAEK (431 aa)) lie on the Cytoplasmic side of the membrane. Disordered regions lie at residues 613-675 (LSTK…KKSA) and 714-756 (SPSD…KTSM). A compositionally biased stretch (polar residues) spans 651-669 (KSSGDAQKSDDTACSQQSR). Position 674 is a phosphoserine (Ser674). One can recognise a Protein kinase; inactive domain in the interval 688–1024 (LSELIQIGRG…QLGAALSKAM (337 aa)). A compositionally biased stretch (basic and acidic residues) spans 716 to 727 (SDKDADTEKQHS).

The protein belongs to the protein kinase superfamily. Tyr protein kinase family. Insulin receptor subfamily. As to quaternary structure, interacts with plexA; component of a receptor complex that mediates the repulsive signaling in response to Semaphorin ligands.

Its subcellular location is the cell membrane. In terms of biological role, acts as a calcium-dependent, homophilic cell adhesion molecule that regulates neural recognition during the development of the nervous system. Component of the repulsive Plexin signaling response to regulate motor axon guidance at the embryonic stage. Also component of a receptor complex that is required in the adult visual system to innervate the lamina layer; specific targeting of R1-R6 axons. In Drosophila simulans (Fruit fly), this protein is Tyrosine-protein kinase-like otk.